We begin with the raw amino-acid sequence, 399 residues long: MSEKHLFTSESVSEGHPDKVADQISDAILDAILAQDPHAHVACETVVYTGTVNVFGEISTSAYVDIAHVVRETIKKIGYTDSENGFDYKSVGVHVSLVEQSSDIAQGVNEAEEVRDKNGQLVDPLDLIGAGDQGMMFGFATNETAEYMPLAISLSHKLVKKLADLRKSGEISYLRPDAKSQVTVEYDDNGKAKRIDTVVISTQHAASARNEEIHDDVINKVIKAVIPAELLDDETKYFINPTGRFVIGGPQGDSGLTGRKIIVDTYGGYAPHGGGAFSGKDATKVDRSASYAARYVAKNIVAAGLAEKAQIQLSYAIGVATPTSINVDTFGTGKVSDDELLAAIRKVFDLRPAGIIQMLDLLRPIYGQTAAYGHFGRTDVELPWEQTDKVEELKSVLGK.

ATP is bound at residue His-16. A Mg(2+)-binding site is contributed by Asp-18. Position 44 (Glu-44) interacts with K(+). The L-methionine site is built by Glu-57 and Gln-100. The segment at 100–110 (QSSDIAQGVNE) is flexible loop. ATP is bound by residues 177-179 (DAK), 244-245 (RF), Asp-253, 259-260 (RK), Ala-276, and Lys-280. Asp-253 contributes to the L-methionine binding site. Lys-284 is a binding site for L-methionine.

Belongs to the AdoMet synthase family. Homotetramer; dimer of dimers. Mg(2+) is required as a cofactor. The cofactor is K(+).

It is found in the cytoplasm. The enzyme catalyses L-methionine + ATP + H2O = S-adenosyl-L-methionine + phosphate + diphosphate. It participates in amino-acid biosynthesis; S-adenosyl-L-methionine biosynthesis; S-adenosyl-L-methionine from L-methionine: step 1/1. Its function is as follows. Catalyzes the formation of S-adenosylmethionine (AdoMet) from methionine and ATP. The overall synthetic reaction is composed of two sequential steps, AdoMet formation and the subsequent tripolyphosphate hydrolysis which occurs prior to release of AdoMet from the enzyme. The sequence is that of S-adenosylmethionine synthase from Lactococcus lactis subsp. lactis (strain IL1403) (Streptococcus lactis).